We begin with the raw amino-acid sequence, 198 residues long: Putative 3-methyladenine DNA glycosylase (198 aa).

It belongs to the DNA glycosylase MPG family.

The sequence is that of Putative 3-methyladenine DNA glycosylase from Natranaerobius thermophilus (strain ATCC BAA-1301 / DSM 18059 / JW/NM-WN-LF).